We begin with the raw amino-acid sequence, 118 residues long: MTNYLVAMEAAWLVRDVNDIDDAIGVAVSEAGKRLNDRDKEYVEVEVGATPCPACGEPFDSAFIAADTALVGLLLEITVFNADGEKHASRIAKSEVGGALRDVPLSVIDCVETEDDDT.

Belongs to the UPF0212 family.

This is UPF0212 protein HQ_2663A from Haloquadratum walsbyi (strain DSM 16790 / HBSQ001).